The primary structure comprises 409 residues: Putative competence-damage inducible protein (409 aa).

This sequence belongs to the CinA family.

In Clostridium botulinum (strain Loch Maree / Type A3), this protein is Putative competence-damage inducible protein.